The chain runs to 195 residues: UPF0215 protein TGAM_0348 (195 aa).

It belongs to the UPF0215 family.

This chain is UPF0215 protein TGAM_0348, found in Thermococcus gammatolerans (strain DSM 15229 / JCM 11827 / EJ3).